We begin with the raw amino-acid sequence, 334 residues long: Ribosomal RNA small subunit methyltransferase H (334 aa).

S-adenosyl-L-methionine-binding positions include 54-56, D74, F100, D121, and Q128; that span reads GGH. Positions 272 to 318 are disordered; sequence RHSKGQYPEDENLPMPPKRPRYFSKPKRVGPSKAEISNNPRSRSAWL. Residues 289-301 are compositionally biased toward basic residues; that stretch reads KRPRYFSKPKRVG.

The protein belongs to the methyltransferase superfamily. RsmH family.

It is found in the cytoplasm. The enzyme catalyses cytidine(1402) in 16S rRNA + S-adenosyl-L-methionine = N(4)-methylcytidine(1402) in 16S rRNA + S-adenosyl-L-homocysteine + H(+). Functionally, specifically methylates the N4 position of cytidine in position 1402 (C1402) of 16S rRNA. This Psychrobacter arcticus (strain DSM 17307 / VKM B-2377 / 273-4) protein is Ribosomal RNA small subunit methyltransferase H.